The chain runs to 92 residues: Small ribosomal subunit protein bS18 (92 aa).

Belongs to the bacterial ribosomal protein bS18 family. As to quaternary structure, part of the 30S ribosomal subunit. Forms a tight heterodimer with protein bS6.

Functionally, binds as a heterodimer with protein bS6 to the central domain of the 16S rRNA, where it helps stabilize the platform of the 30S subunit. This is Small ribosomal subunit protein bS18 from Caulobacter sp. (strain K31).